The following is a 205-amino-acid chain: Guanylyl cyclase-activating protein 1 (205 aa).

The N-myristoyl glycine moiety is linked to residue glycine 2. Asparagine 3 carries the post-translational modification Deamidated asparagine. 4 EF-hand domains span residues 14–49, 51–86, 87–122, and 131–166; these read SSTE…KNLS, WASQ…VLKG, KVEQ…IRAI, and TAEE…DQML. Ca(2+) is bound by residues aspartate 64, asparagine 66, aspartate 68, tyrosine 70, glutamate 75, aspartate 100, aspartate 102, asparagine 104, cysteine 106, glutamate 111, aspartate 144, asparagine 146, aspartate 148, glutamate 150, and glutamate 155. A disordered region spans residues 185–205; that stretch reads NGEQDEEGASGRETEAAEADG.

In terms of assembly, homodimer. Detected in the retina. Detected in rod and cone photoreceptor cells (at protein level). Also present in certain pinealocytes.

The protein localises to the membrane. It localises to the photoreceptor inner segment. The protein resides in the cell projection. It is found in the cilium. Its subcellular location is the photoreceptor outer segment. Its function is as follows. Stimulates retinal guanylyl cyclase when free calcium ions concentration is low and inhibits guanylyl cyclase when free calcium ions concentration is elevated. This Ca(2+)-sensitive regulation of retinal guanylyl cyclase is a key event in recovery of the dark state of rod photoreceptors following light exposure. May be involved in cone photoreceptor light response and recovery of response in bright light. The protein is Guanylyl cyclase-activating protein 1 (GUCA1A) of Bos taurus (Bovine).